We begin with the raw amino-acid sequence, 373 residues long: RNA 3'-terminal phosphate cyclase-like protein (373 aa).

It belongs to the RNA 3'-terminal cyclase family. Type 2 subfamily. In terms of assembly, part of the small subunit (SSU) processome, composed of more than 70 proteins and the RNA chaperone small nucleolar RNA (snoRNA) U3. Interacts with BMS1.

It is found in the nucleus. The protein resides in the nucleolus. Its function is as follows. As part of the small subunit (SSU) processome, it plays a role in 40S-ribosomal-subunit biogenesis in the early pre-rRNA processing steps at sites A0, A1 and A2 that are required for proper maturation of the 18S RNA. Activates BMS1 by promoting GDP/GTP exchange. Does not have cyclase activity. This chain is RNA 3'-terminal phosphate cyclase-like protein (Rcl1), found in Mus musculus (Mouse).